The chain runs to 709 residues: UV-stimulated scaffold protein A (709 aa).

A compositionally biased stretch (basic and acidic residues) spans 1 to 10; that stretch reads MDQKLSKLVE. A disordered region spans residues 1–20; it reads MDQKLSKLVEELTTSGEPRL. Residues 2 to 145 are VHS-like; it reads DQKLSKLVEE…HFLRHNKKVD (144 aa). Residues 165–199 are a coiled coil; it reads KHLDKIYQERASQAEREMQEMSGEIESCLTEVESC. Disordered stretches follow at residues 230–289 and 386–406; these read SCAG…DSDL and EGGE…EDDE. The segment covering 280 to 289 has biased composition (acidic residues); it reads PSDEDEDSDL. Residues serine 281 and serine 287 each carry the phosphoserine modification. Residues 386–395 are compositionally biased toward basic and acidic residues; the sequence is EGGERRRTEA. The segment covering 397–406 has biased composition (acidic residues); it reads GDAEEDEDDE. Lysine 414 is covalently cross-linked (Glycyl lysine isopeptide (Lys-Gly) (interchain with G-Cter in ubiquitin)). Residues 469 to 495 are disordered; the sequence is DHLPPPSSASPSRALPEPQEAQKLAAE. Over residues 477–486 the composition is skewed to low complexity; sequence ASPSRALPEP. The segment at 564-591 adopts a UVSSA-type zinc-finger fold; that stretch reads QHWCRAPRPDGRLCERQDRLKCPFHGKI. Zn(2+) contacts are provided by cysteine 567, cysteine 577, cysteine 585, and histidine 588. The disordered stretch occupies residues 588-655; that stretch reads HGKIVPRDDE…GKGRGKKRRY (68 aa). The segment covering 592–632 has biased composition (basic and acidic residues); that stretch reads VPRDDEGRPLDPEDRAREQRRQLQKQERPEWQDPELMRDVE. Basic residues predominate over residues 646–655; the sequence is GKGRGKKRRY.

This sequence belongs to the UVSSA family. In terms of assembly, interacts with the elongating form of RNA polymerase II (RNA pol IIo) during transcription stress. Interacts with the TFIIH complex during transcription stress. Interacts with ERCC6. Interacts with ERCC8. Interacts with USP7. Post-translationally, monoubiquitinated at Lys-414 in response to transcription stress; this promotes efficient transfer of TFIIH to stalled RNA polymerase II.

The protein localises to the chromosome. In terms of biological role, factor involved in transcription-coupled nucleotide excision repair (TC-NER), a mechanism that rapidly removes RNA polymerase II-blocking lesions from the transcribed strand of active genes. Acts as a key adapter that promotes recruitment of factors involved in TC-NER. Facilitates the ubiquitination of the elongating form of RNA polymerase II (RNA pol IIo) at DNA damage sites, thereby promoting RNA pol IIo backtracking and access by the TC-NER machinery to lesion sites. Also promotes stabilization of ERCC6/CSB by recruiting deubiquitinating enzyme USP7 to TC-NER complexes, preventing UV-induced degradation of ERCC6 by the proteasome. Mediates the recruitment of the TFIIH complex and other factors that are required for nucleotide excision repair to RNA polymerase II. Also required to inactivate stalled RNA polymerase II by blocking the access of TCEA1/TFIIS, thereby preventing reactivation of RNA polymerase II. Not involved in processing oxidative damage. This is UV-stimulated scaffold protein A from Homo sapiens (Human).